The chain runs to 424 residues: Dihydroorotase (424 aa).

The Zn(2+) site is built by histidine 61 and histidine 63. Substrate is bound by residues 63 to 65 and asparagine 95; that span reads HLR. The Zn(2+) site is built by aspartate 153, histidine 180, and histidine 233. Asparagine 279 contacts substrate. A Zn(2+)-binding site is contributed by aspartate 306. The active site involves aspartate 306. Histidine 310 lines the substrate pocket.

This sequence belongs to the metallo-dependent hydrolases superfamily. DHOase family. Class I DHOase subfamily. Zn(2+) serves as cofactor.

It carries out the reaction (S)-dihydroorotate + H2O = N-carbamoyl-L-aspartate + H(+). It functions in the pathway pyrimidine metabolism; UMP biosynthesis via de novo pathway; (S)-dihydroorotate from bicarbonate: step 3/3. Its function is as follows. Catalyzes the reversible cyclization of carbamoyl aspartate to dihydroorotate. The polypeptide is Dihydroorotase (Geobacter metallireducens (strain ATCC 53774 / DSM 7210 / GS-15)).